The sequence spans 554 residues: CTP synthase (554 aa).

An amidoligase domain region spans residues 1-279 (MTSSRKVRPT…DTFIIRRLGL (279 aa)). A CTP-binding site is contributed by serine 21. Serine 21 provides a ligand contact to UTP. ATP-binding positions include 22–27 (SLGKGL) and aspartate 79. Aspartate 79 and glutamate 153 together coordinate Mg(2+). CTP contacts are provided by residues 160–162 (DIE), 200–205 (KTKPTQ), and lysine 236. Residues 200–205 (KTKPTQ) and lysine 236 each bind UTP. The Glutamine amidotransferase type-1 domain occupies 304 to 553 (TVGIVGKYID…VKTALELRVH (250 aa)). Position 367 (glycine 367) interacts with L-glutamine. Cysteine 394 acts as the Nucleophile; for glutamine hydrolysis in catalysis. L-glutamine contacts are provided by residues 395–398 (LGLQ), glutamate 417, and arginine 478. Residues histidine 526 and glutamate 528 contribute to the active site.

The protein belongs to the CTP synthase family. As to quaternary structure, homotetramer.

It carries out the reaction UTP + L-glutamine + ATP + H2O = CTP + L-glutamate + ADP + phosphate + 2 H(+). The catalysed reaction is L-glutamine + H2O = L-glutamate + NH4(+). It catalyses the reaction UTP + NH4(+) + ATP = CTP + ADP + phosphate + 2 H(+). The protein operates within pyrimidine metabolism; CTP biosynthesis via de novo pathway; CTP from UDP: step 2/2. Its activity is regulated as follows. Allosterically activated by GTP, when glutamine is the substrate; GTP has no effect on the reaction when ammonia is the substrate. The allosteric effector GTP functions by stabilizing the protein conformation that binds the tetrahedral intermediate(s) formed during glutamine hydrolysis. Inhibited by the product CTP, via allosteric rather than competitive inhibition. Its function is as follows. Catalyzes the ATP-dependent amination of UTP to CTP with either L-glutamine or ammonia as the source of nitrogen. Regulates intracellular CTP levels through interactions with the four ribonucleotide triphosphates. The chain is CTP synthase from Corynebacterium glutamicum (strain R).